The primary structure comprises 648 residues: cAMP-dependent protein kinase catalytic subunit (648 aa).

Low complexity-rich tracts occupy residues 1–20, 46–67, 136–175, and 232–254; these read MSNS…TINN, SGNN…NSSG, QQQP…PQQQ, and NTPS…NPHT. 4 disordered regions span residues 1 to 25, 40 to 86, 121 to 175, and 219 to 290; these read MSNS…KVNV, GGGG…TKMD, KVPS…PQQQ, and QQQQ…DTNP. A compositionally biased stretch (polar residues) spans 255–290; sequence SGLSLQHAHSSYTPSNVLHSPTHFQSSLPTRLDTNP. The 255-residue stretch at 336–590 folds into the Protein kinase domain; the sequence is FKQIRVIGTG…ALDVKNHRWF (255 aa). ATP contacts are provided by residues 342-350 and Lys-365; that span reads IGTGTFGKV. The Proton acceptor role is filled by Asp-459. Thr-490 carries the phosphothreonine modification. Positions 591-648 constitute an AGC-kinase C-terminal domain; it reads SDINWERLYQRRDNGPFIPKIQHQGDSSNFEMYDEEEMVEEPPSSNYVDPYAHLFKDF.

It belongs to the protein kinase superfamily. AGC Ser/Thr protein kinase family. cAMP subfamily. As to quaternary structure, in Dictyostelium the holoenzyme is a dimer composed of a regulatory (R) and a catalytic (C) subunit. In the presence of cAMP it dissociates into the active C subunit and an R monomer.

The enzyme catalyses L-seryl-[protein] + ATP = O-phospho-L-seryl-[protein] + ADP + H(+). It catalyses the reaction L-threonyl-[protein] + ATP = O-phospho-L-threonyl-[protein] + ADP + H(+). Its function is as follows. Essential for differentiation and fruit morphogenesis. In Dictyostelium discoideum (Social amoeba), this protein is cAMP-dependent protein kinase catalytic subunit (pkaC).